The chain runs to 297 residues: Guanylate kinase (297 aa).

Positions 4–183 (GKMIIISGPS…AVAKITDVLH (180 aa)) constitute a Guanylate kinase-like domain. 11 to 18 (GPSGVGKG) lines the ATP pocket. The unknown stretch occupies residues 204–297 (EQIVKEKYMY…EQKHYNNDEF (94 aa)).

It belongs to the guanylate kinase family.

The protein localises to the cytoplasm. The enzyme catalyses GMP + ATP = GDP + ADP. Its function is as follows. Essential for recycling GMP and indirectly, cGMP. This Mycoplasma capricolum subsp. capricolum (strain California kid / ATCC 27343 / NCTC 10154) protein is Guanylate kinase (gmk).